Consider the following 194-residue polypeptide: ATP-dependent Clp protease proteolytic subunit (194 aa).

S98 serves as the catalytic Nucleophile. Residue H123 is part of the active site.

It belongs to the peptidase S14 family. As to quaternary structure, fourteen ClpP subunits assemble into 2 heptameric rings which stack back to back to give a disk-like structure with a central cavity, resembling the structure of eukaryotic proteasomes.

It localises to the cytoplasm. The enzyme catalyses Hydrolysis of proteins to small peptides in the presence of ATP and magnesium. alpha-casein is the usual test substrate. In the absence of ATP, only oligopeptides shorter than five residues are hydrolyzed (such as succinyl-Leu-Tyr-|-NHMec, and Leu-Tyr-Leu-|-Tyr-Trp, in which cleavage of the -Tyr-|-Leu- and -Tyr-|-Trp bonds also occurs).. Cleaves peptides in various proteins in a process that requires ATP hydrolysis. Has a chymotrypsin-like activity. Plays a major role in the degradation of misfolded proteins. The sequence is that of ATP-dependent Clp protease proteolytic subunit from Clostridium tetani (strain Massachusetts / E88).